The following is a 302-amino-acid chain: Polyadenylate-binding protein 2 (302 aa).

Low complexity predominate over residues M1–G12. A disordered region spans residues M1–E111. A2 carries the N-acetylalanine modification. An interaction with SKIP region spans residues A2 to K141. Position 17 is an omega-N-methylarginine (R17). At S19 the chain carries Phosphoserine. Over residues G30–G47 the composition is skewed to gly residues. Positions E51–E68 are enriched in acidic residues. S52 bears the Phosphoserine mark. A compositionally biased stretch (pro residues) spans P73–G83. At S91 the chain carries Phosphoserine. The stretch at E111–P147 forms a coiled coil. A stimulates PAPOLA region spans residues L115–M143. 2 positions are modified to phosphoserine: S146 and S231. The RRM domain maps to R168 to T245. An asymmetric dimethylarginine; alternate mark is found at R234, R255, and R259. 3 positions are modified to omega-N-methylarginine; alternate: R234, R255, and R259. The segment at R255–Y302 is strong poly(A) affinity and self-association. 11 positions are modified to asymmetric dimethylarginine: R261, R263, R265, R273, R275, R283, R285, R287, R290, R292, and R294. The tract at residues S282 to Y302 is interaction with PAPOLA.

Monomer and homooligomer. Identified in a IGF2BP1-dependent mRNP granule complex containing untranslated mRNAs. Binds RNA as a monomer and oligomerizes when bound to poly(A). Interacts with PAPOLA, but only in presence of oligo(A) RNA. Interacts with NUDT21/CPSF5 and transportin. Associates in a ternary complex with CPSF4 and NS/NS1 and interaction with NS/NS1, blocks nuclear export of host cell mRNAs. Associates in a single complex with SKIP and MYOD1 and interacts with SKIP in differentiated myocytes. May interact with SETX. Interacts (via RRM domain and C-terminal arginine-rich region) with ZFP36 (via hypophosphorylated form); this interaction occurs in the nucleus in a RNA-independent manner, decreases in presence of single-stranded poly(A) RNA-oligomer and in a p38-dependent-manner and may down-regulated RNA poly(A) polymerase activity. Component of the poly(A) tail exosome targeting (PAXT) complex composed of PABPN1, ZFC3H1 and MTREX. Interacts with ZFC3H1 in a RNase-insensitive manner. Interacts with FRG1. Interacts with ZC3H11A. Arginine dimethylation is asymmetric and involves PRMT1 and PRMT3. It does not influence the RNA binding properties. In terms of tissue distribution, ubiquitous.

The protein localises to the cytoplasm. It localises to the nucleus. Its subcellular location is the nucleus speckle. Functionally, involved in the 3'-end formation of mRNA precursors (pre-mRNA) by the addition of a poly(A) tail of 200-250 nt to the upstream cleavage product. Stimulates poly(A) polymerase (PAPOLA) conferring processivity on the poly(A) tail elongation reaction and also controls the poly(A) tail length. Increases the affinity of poly(A) polymerase for RNA. Is also present at various stages of mRNA metabolism including nucleocytoplasmic trafficking and nonsense-mediated decay (NMD) of mRNA. Cooperates with SKIP to synergistically activate E-box-mediated transcription through MYOD1 and may regulate the expression of muscle-specific genes. Binds to poly(A) and to poly(G) with high affinity. May protect the poly(A) tail from degradation. Subunit of the trimeric poly(A) tail exosome targeting (PAXT) complex, a complex that directs a subset of long and polyadenylated poly(A) RNAs for exosomal degradation. The RNA exosome is fundamental for the degradation of RNA in eukaryotic nuclei. Substrate targeting is facilitated by its cofactor MTREX, which links to RNA-binding protein adapters. The chain is Polyadenylate-binding protein 2 (Pabpn1) from Mus musculus (Mouse).